The following is a 507-amino-acid chain: Cytochrome P450 monooxygenase nodZ (507 aa).

2 helical membrane-spanning segments follow: residues 1–21 (MITASTSVFGGLILAFIFSLL) and 205–225 (GFLHCMAIAGTILGAVTPWFL). N352 carries an N-linked (GlcNAc...) asparagine glycan. C445 serves as a coordination point for heme.

It belongs to the cytochrome P450 family. It depends on heme as a cofactor.

Its subcellular location is the membrane. It functions in the pathway secondary metabolite biosynthesis. Functionally, cytochrome P450 monooxygenase; part of the gene cluster that mediates the biosynthesis of the indole diterpenes nodulisporic acids (NA). Nodulisporic acid A (NAA) and its chemically modified derivatives are of particular significance because of their highly potent insecticidal activity against blood-feeding arthropods and lack of observable adverse effects on mammals, in particular the tremogenicity associated with the paspaline-derived IDTs is not observed. The geranylgeranyl diphosphate (GGPP) synthase ggs1, localized outside of the cluster, is proposed to catalyze the first step in nodulisporic acid biosynthesis via conversion of farnesyl pyrophosphate and isopentyl pyrophosphate into geranylgeranyl pyrophosphate (GGPP). Condensation of indole-3-glycerol phosphate with GGPP by the prenyl transferase nodC then forms 3-geranylgeranylindole (3-GGI). Epoxidation by the FAD-dependent monooxygenase nodM leads to a single-epoxidized-GGI that is substrate of the terpene cyclase nodB for cyclization to yield emindole SB. The terminal methyl carbon, C28, of emindole SB is then oxidized by the cytochrome P450 monooxygenase nodW to produce nodulisporic acid F (NAF), the pentacyclic core of NAA. NAF is converted to nodulisporic acid E (NAE) via prenylation. This step is probably performed by one of the indole diterpene prenyltransferases nodD1 or nodD2. Several oxidation steps performed by the FAD-linked oxidoreductase nodO and one of the cytochrome P450 monooxygenase nodR, nodX or nodZ further convert NAE to nodulisporic acid D (NAD). NAD is substrate of cytochrome P450 monooxygenase nodJ to produce the precursor of nodulisporic acid C (NAC), converted to NAC by one of the indole diterpene prenyltransferases nodD1 or nodD2. The FAD-dependent monooxygenase nodY2 then oxidizes NAC to nodulisporic acid B (NAB). Finally NAB is converted to NAA by one of the cytochrome P450 monooxygenases nodR, nodX or nodZ. The chain is Cytochrome P450 monooxygenase nodZ from Hypoxylon pulicicidum.